A 2559-amino-acid chain; its full sequence is Stabilin-2 (2559 aa).

Positions 1–28 (MARSKLLLGKLLPLILIFLGLLVQNACS) are cleaved as a signal peptide. Topologically, residues 29-2464 (PTEAPELTKR…PPTAATAAHS (2436 aa)) are extracellular. Residue asparagine 71 is glycosylated (N-linked (GlcNAc...) asparagine). EGF-like domains are found at residues 116-156 (DCME…TACE), 164-201 (FGPN…PRCD), 203-244 (PIPE…QTCK), 245-284 (PINP…QVCL), and 330-370 (MTDI…LNCY). Cystine bridges form between cysteine 120–cysteine 134, cysteine 128–cysteine 144, and cysteine 146–cysteine 155. Asparagine 167 carries an N-linked (GlcNAc...) asparagine glycan. Disulfide bonds link cysteine 168–cysteine 179, cysteine 172–cysteine 189, cysteine 191–cysteine 200, cysteine 207–cysteine 218, cysteine 212–cysteine 230, cysteine 232–cysteine 243, cysteine 249–cysteine 260, cysteine 254–cysteine 270, cysteine 272–cysteine 283, cysteine 334–cysteine 346, cysteine 340–cysteine 356, and cysteine 358–cysteine 369. Asparagine 345 is a glycosylation site (N-linked (GlcNAc...) asparagine). FAS1 domains are found at residues 379 to 512 (ELNT…DRAM) and 522 to 659 (NPQQ…TGVL). Residues asparagine 572, asparagine 626, asparagine 673, and asparagine 691 are each glycosylated (N-linked (GlcNAc...) asparagine). One can recognise an EGF-like 6 domain in the interval 743 to 783 (DCNPCPGGFMNPCSGNGQCIDGLGGNGTCICEDGFQGSRCQ). Cystine bridges form between cysteine 747–cysteine 761, cysteine 755–cysteine 771, and cysteine 773–cysteine 782. N-linked (GlcNAc...) asparagine glycosylation is present at asparagine 768. N-linked (GlcNAc...) asparagine glycosylation is present at asparagine 796. 4 EGF-like domains span residues 833–873 (QTSA…TLCS), 874–917 (KKDP…RDCV), 918–960 (EINS…IDCE), and 961–1002 (PIIS…VLCY). Intrachain disulfides connect cysteine 837–cysteine 850, cysteine 844–cysteine 859, cysteine 861–cysteine 872, cysteine 878–cysteine 893, cysteine 887–cysteine 903, cysteine 905–cysteine 916, cysteine 922–cysteine 936, cysteine 930–cysteine 946, cysteine 948–cysteine 959, cysteine 965–cysteine 978, cysteine 972–cysteine 988, and cysteine 990–cysteine 1001. An N-linked (GlcNAc...) asparagine glycan is attached at asparagine 854. Asparagine 933 carries N-linked (GlcNAc...) asparagine glycosylation. 2 consecutive FAS1 domains span residues 1002–1135 (YGNV…NKVL) and 1145–1273 (LPSL…EKVL). Residues asparagine 1024, asparagine 1036, asparagine 1108, asparagine 1255, and asparagine 1283 are each glycosylated (N-linked (GlcNAc...) asparagine). Positions 1350-1415 (PQCQACPGKG…CSCVHGRCNQ (66 aa)) constitute a Laminin EGF-like 1 domain. 18 cysteine pairs are disulfide-bonded: cysteine 1355–cysteine 1369, cysteine 1363–cysteine 1379, cysteine 1381–cysteine 1390, cysteine 1402–cysteine 1413, cysteine 1406–cysteine 1423, cysteine 1425–cysteine 1434, cysteine 1443–cysteine 1453, cysteine 1447–cysteine 1463, cysteine 1465–cysteine 1476, cysteine 1482–cysteine 1495, cysteine 1489–cysteine 1505, cysteine 1507–cysteine 1518, cysteine 1524–cysteine 1537, cysteine 1531–cysteine 1547, cysteine 1549–cysteine 1560, cysteine 1566–cysteine 1579, cysteine 1573–cysteine 1589, and cysteine 1591–cysteine 1602. Asparagine 1374 and asparagine 1386 each carry an N-linked (GlcNAc...) asparagine glycan. EGF-like domains lie at 1439 to 1477 (TTDN…TVCT), 1478 to 1519 (AINA…IVCL), 1520 to 1561 (EINP…KVCT), and 1562 to 1603 (LINV…IVCR). Asparagine 1444 is a glycosylation site (N-linked (GlcNAc...) asparagine). N-linked (GlcNAc...) asparagine glycosylation occurs at asparagine 1472. The N-linked (GlcNAc...) asparagine glycan is linked to asparagine 1580. FAS1 domains follow at residues 1603 to 1731 (RGSI…DTLL) and 1747 to 1888 (VLLN…DCLL). The N-linked (GlcNAc...) asparagine glycan is linked to asparagine 1750. Residues 1965-2030 (PDCQACPGGP…GCSEHGQCDE (66 aa)) enclose the Laminin EGF-like 2 domain. Intrachain disulfides connect cysteine 1970-cysteine 1984, cysteine 1978-cysteine 1994, cysteine 1996-cysteine 2005, cysteine 2017-cysteine 2028, cysteine 2022-cysteine 2038, cysteine 2040-cysteine 2049, cysteine 2059-cysteine 2069, cysteine 2063-cysteine 2075, cysteine 2077-cysteine 2088, cysteine 2094-cysteine 2107, cysteine 2101-cysteine 2116, cysteine 2118-cysteine 2129, cysteine 2135-cysteine 2149, cysteine 2143-cysteine 2159, cysteine 2161-cysteine 2172, cysteine 2228-cysteine 2296, and cysteine 2252-cysteine 2273. An N-linked (GlcNAc...) asparagine glycan is attached at asparagine 2001. EGF-like domains follow at residues 2055-2089 (VIPV…ITCT), 2090-2130 (VVDF…HSCT), and 2131-2173 (EIDP…RDCE). A glycan (N-linked (GlcNAc...) asparagine) is linked at asparagine 2072. Residues 2206 to 2298 (GVFHLRSPLG…SEMWDVFCYR (93 aa)) enclose the Link domain. Residues asparagine 2287, asparagine 2303, asparagine 2375, asparagine 2391, and asparagine 2400 are each glycosylated (N-linked (GlcNAc...) asparagine). The FAS1 7 domain maps to 2318–2452 (NGNLLQVLMS…GVLHIISEPL (135 aa)). The chain crosses the membrane as a helical span at residues 2465–2485 (GLGTGIFCAVVLVTGAIALAA). Residues 2486 to 2559 (YSYFRLNQRT…NSDPLGALRS (74 aa)) lie on the Cytoplasmic side of the membrane. At serine 2503 the chain carries Phosphoserine. An interaction with TMSB4X region spans residues 2510–2520 (LAFGKQQPESI). Residues 2514–2559 (KQQPESITNPLYETSTPAAPEPSCDPFTDSGERELENSDPLGALRS) are disordered. Over residues 2516 to 2530 (QPESITNPLYETSTP) the composition is skewed to polar residues.

Interacts with heparin, alpha-M/beta-2 integrin (ITGAM and ITGB2), and thymosin beta 4 (TMSB4X). Interacts with GULP1. Associates with clathrin and adapter protein AP-2; in liver sinusoidal endothelial cells (LSECs). In terms of processing, glycosylated. Post-translationally, proteolytically processed to yield a smaller protein. As to expression, expressed in endothelial sinuses of liver, lymph nodes, bone marrow, spleen and in specialised structures of eye, heart, brain and kidney. Expression is detected in corneal and lens epithelium, in mesenchymal cells of the heart valves, in the ependymal cells lining the ventricles in the brain, and in the prismatic epithelial cells covering the renal papillae.

It is found in the cytoplasm. It localises to the cell membrane. In terms of biological role, phosphatidylserine receptor that enhances the engulfment of apoptotic cells. Hyaluronan receptor that binds to and mediates endocytosis of hyaluronic acid (HA). Also acts, in different species, as a primary systemic scavenger receptor for heparin (Hep), chondroitin sulfate (CS), dermatan sulfate (DS), nonglycosaminoglycan (GAG), acetylated low-density lipoprotein (AcLDL), pro-collagen propeptides and advanced glycation end products (AGE). May serve to maintain tissue integrity by supporting extracellular matrix turnover or it may contribute to maintaining fluidity of bodily liquids by resorption of hyaluronan. Counter receptor which plays an important role in lymphocyte recruitment in the hepatic vasculature. Binds to both Gram-positive and Gram-negative bacteria and may play a role in defense against bacterial infection. The proteolytically processed short form also functions as an endocytosis receptor for heparin internalization as well as HA and CS. The chain is Stabilin-2 from Mus musculus (Mouse).